We begin with the raw amino-acid sequence, 638 residues long: Phosphomethylpyrimidine synthase (638 aa).

Substrate-binding positions include asparagine 243, methionine 272, tyrosine 301, histidine 337, 357-359, 398-401, and glutamate 437; these read SRG and DGLR. Zn(2+) is bound at residue histidine 441. Tyrosine 464 serves as a coordination point for substrate. Residue histidine 505 coordinates Zn(2+). Residues cysteine 585, cysteine 588, and cysteine 593 each contribute to the [4Fe-4S] cluster site.

The protein belongs to the ThiC family. Homodimer. [4Fe-4S] cluster serves as cofactor.

It catalyses the reaction 5-amino-1-(5-phospho-beta-D-ribosyl)imidazole + S-adenosyl-L-methionine = 4-amino-2-methyl-5-(phosphooxymethyl)pyrimidine + CO + 5'-deoxyadenosine + formate + L-methionine + 3 H(+). Its pathway is cofactor biosynthesis; thiamine diphosphate biosynthesis. Functionally, catalyzes the synthesis of the hydroxymethylpyrimidine phosphate (HMP-P) moiety of thiamine from aminoimidazole ribotide (AIR) in a radical S-adenosyl-L-methionine (SAM)-dependent reaction. In Dechloromonas aromatica (strain RCB), this protein is Phosphomethylpyrimidine synthase.